A 283-amino-acid chain; its full sequence is MRTQWPSPAKLNLFLYITGQRADGYHTLQTLFQFLDYGDTISIELRDDGDIRLLTPVEGVEHEDNLIVRAARLLMKTAADSGRLPTGSGANISIDKRLPMGGGLGGGSSNAATVLVALNHLWQCGLSMDELAEMGLTLGADVPVFVRGHAAFAEGVGEILTPVDPPEKWYLVAHPGVSIPTPVIFKDPELPRNTPKRSIETLLKCEFSNDCEVIARKRFREVDAVLSWLLEYAPSRLTGTGACVFAEFDTESEARQVLEQAPEWLNGFVAKGANLSPLHRAML.

The active site involves Lys10. 99–109 is an ATP binding site; sequence PMGGGLGGGSS. Residue Asp141 is part of the active site.

It belongs to the GHMP kinase family. IspE subfamily. As to quaternary structure, homodimer.

The enzyme catalyses 4-CDP-2-C-methyl-D-erythritol + ATP = 4-CDP-2-C-methyl-D-erythritol 2-phosphate + ADP + H(+). The protein operates within isoprenoid biosynthesis; isopentenyl diphosphate biosynthesis via DXP pathway; isopentenyl diphosphate from 1-deoxy-D-xylulose 5-phosphate: step 3/6. In terms of biological role, catalyzes the phosphorylation of the position 2 hydroxy group of 4-diphosphocytidyl-2C-methyl-D-erythritol. This is 4-diphosphocytidyl-2-C-methyl-D-erythritol kinase from Escherichia coli O157:H7 (strain EC4115 / EHEC).